The chain runs to 344 residues: Arginine N-succinyltransferase (344 aa).

Leu-125 is a succinyl-CoA binding site. His-229 functions as the Proton donor in the catalytic mechanism.

This sequence belongs to the arginine N-succinyltransferase family.

The catalysed reaction is succinyl-CoA + L-arginine = N(2)-succinyl-L-arginine + CoA + H(+). The protein operates within amino-acid degradation; L-arginine degradation via AST pathway; L-glutamate and succinate from L-arginine: step 1/5. Functionally, catalyzes the transfer of succinyl-CoA to arginine to produce N(2)-succinylarginine. This chain is Arginine N-succinyltransferase, found in Escherichia fergusonii (strain ATCC 35469 / DSM 13698 / CCUG 18766 / IAM 14443 / JCM 21226 / LMG 7866 / NBRC 102419 / NCTC 12128 / CDC 0568-73).